Consider the following 215-residue polypeptide: Probable phosphoglycerate mutase GpmB (215 aa).

Residues 8 to 15 (RHGETEWN), 21 to 22 (QG), R58, 82 to 85 (ELDM), and 151 to 152 (GI) each bind substrate. The active-site Tele-phosphohistidine intermediate is the H9. E82 serves as the catalytic Proton donor/acceptor.

Belongs to the phosphoglycerate mutase family. GpmB subfamily.

It catalyses the reaction (2R)-2-phosphoglycerate = (2R)-3-phosphoglycerate. Its pathway is carbohydrate degradation; glycolysis; pyruvate from D-glyceraldehyde 3-phosphate: step 3/5. The protein is Probable phosphoglycerate mutase GpmB of Proteus mirabilis (strain HI4320).